We begin with the raw amino-acid sequence, 576 residues long: Arginine--tRNA ligase (576 aa).

The 'HIGH' region signature appears at 122 to 132 (PNVAKQMHVGH).

It belongs to the class-I aminoacyl-tRNA synthetase family. As to quaternary structure, monomer.

It localises to the cytoplasm. It catalyses the reaction tRNA(Arg) + L-arginine + ATP = L-arginyl-tRNA(Arg) + AMP + diphosphate. The sequence is that of Arginine--tRNA ligase from Yersinia pestis bv. Antiqua (strain Antiqua).